Here is a 274-residue protein sequence, read N- to C-terminus: NH(3)-dependent NAD(+) synthetase (274 aa).

ATP is bound at residue 46-53 (GISGGQDS). A Mg(2+)-binding site is contributed by aspartate 52. Arginine 140 contributes to the deamido-NAD(+) binding site. Residue threonine 160 participates in ATP binding. Glutamate 165 provides a ligand contact to Mg(2+). Residues lysine 173 and aspartate 180 each coordinate deamido-NAD(+). ATP is bound by residues lysine 189 and threonine 211. Position 260–261 (260–261 (HK)) interacts with deamido-NAD(+).

The protein belongs to the NAD synthetase family. Homodimer.

The catalysed reaction is deamido-NAD(+) + NH4(+) + ATP = AMP + diphosphate + NAD(+) + H(+). The protein operates within cofactor biosynthesis; NAD(+) biosynthesis; NAD(+) from deamido-NAD(+) (ammonia route): step 1/1. Catalyzes the ATP-dependent amidation of deamido-NAD to form NAD. Uses ammonia as a nitrogen source. The chain is NH(3)-dependent NAD(+) synthetase from Nocardia farcinica (strain IFM 10152).